Here is a 248-residue protein sequence, read N- to C-terminus: Ribosomal RNA small subunit methyltransferase J (248 aa).

S-adenosyl-L-methionine contacts are provided by residues 98–99 (RD), 114–115 (ER), 150–151 (SS), and Asp-168.

It belongs to the methyltransferase superfamily. RsmJ family.

The protein resides in the cytoplasm. It carries out the reaction guanosine(1516) in 16S rRNA + S-adenosyl-L-methionine = N(2)-methylguanosine(1516) in 16S rRNA + S-adenosyl-L-homocysteine + H(+). Its function is as follows. Specifically methylates the guanosine in position 1516 of 16S rRNA. The protein is Ribosomal RNA small subunit methyltransferase J of Shewanella baltica (strain OS185).